A 119-amino-acid chain; its full sequence is Ribosome-binding factor A (119 aa).

Belongs to the RbfA family. As to quaternary structure, monomer. Binds 30S ribosomal subunits, but not 50S ribosomal subunits or 70S ribosomes.

It localises to the cytoplasm. Its function is as follows. One of several proteins that assist in the late maturation steps of the functional core of the 30S ribosomal subunit. Associates with free 30S ribosomal subunits (but not with 30S subunits that are part of 70S ribosomes or polysomes). Required for efficient processing of 16S rRNA. May interact with the 5'-terminal helix region of 16S rRNA. This chain is Ribosome-binding factor A, found in Buchnera aphidicola subsp. Acyrthosiphon pisum (strain Tuc7).